The following is a 137-amino-acid chain: Small ribosomal subunit protein uS12 (137 aa).

3-methylthioaspartic acid is present on Asp-89. Residues 101–137 (SLDTSGVADRKQSRSKYGAKQPKAGAPAAPVKGKGKK) are disordered. Residues 116-137 (KYGAKQPKAGAPAAPVKGKGKK) show a composition bias toward low complexity.

This sequence belongs to the universal ribosomal protein uS12 family. As to quaternary structure, part of the 30S ribosomal subunit. Contacts proteins S8 and S17. May interact with IF1 in the 30S initiation complex.

In terms of biological role, with S4 and S5 plays an important role in translational accuracy. Functionally, interacts with and stabilizes bases of the 16S rRNA that are involved in tRNA selection in the A site and with the mRNA backbone. Located at the interface of the 30S and 50S subunits, it traverses the body of the 30S subunit contacting proteins on the other side and probably holding the rRNA structure together. The combined cluster of proteins S8, S12 and S17 appears to hold together the shoulder and platform of the 30S subunit. This is Small ribosomal subunit protein uS12 from Chlorobium chlorochromatii (strain CaD3).